The chain runs to 430 residues: Purine nucleoside phosphorylase LACC1 (430 aa).

Position 247 is an N6-acetyllysine (lysine 247). Zn(2+)-binding residues include histidine 250, cysteine 284, and histidine 301.

Belongs to the purine nucleoside phosphorylase YfiH/LACC1 family. In terms of assembly, interacts with FASN. Interacts with SDHA. Interacts with ATF6, EIF2AK3 and ERN1. Post-translationally, phosphorylated on tyrosine residues. As to expression, predominantly expressed in myeloid cells. Highly expressed in primary macrophages and dendritic cells sorted from the peritoneum or spleen, respectively (at protein level).

The protein localises to the cytoplasm. It is found in the nucleus. Its subcellular location is the endoplasmic reticulum. It localises to the peroxisome. The enzyme catalyses adenosine + phosphate = alpha-D-ribose 1-phosphate + adenine. It carries out the reaction inosine + phosphate = alpha-D-ribose 1-phosphate + hypoxanthine. The catalysed reaction is guanosine + phosphate = alpha-D-ribose 1-phosphate + guanine. It catalyses the reaction S-methyl-5'-thioadenosine + phosphate = 5-(methylsulfanyl)-alpha-D-ribose 1-phosphate + adenine. The enzyme catalyses adenosine + H2O + H(+) = inosine + NH4(+). In terms of biological role, purine nucleoside enzyme that catalyzes the phosphorolysis of adenosine, guanosine and inosine nucleosides, yielding D-ribose 1-phosphate and the respective free bases, adenine, guanine and hypoxanthine. Also catalyzes the phosphorolysis of S-methyl-5'-thioadenosine into adenine and S-methyl-5-thio-alpha-D-ribose 1-phosphate. Also has adenosine deaminase activity. Acts as a regulator of innate immunity in macrophages by modulating the purine nucleotide metabolism, thereby regulating the metabolic function and bioenergetic state of macrophages. Enables a purine nucleotide cycle between adenosine and inosine monophosphate and adenylosuccinate that prevents cytoplasmic acidification and balances the cytoplasmic-mitochondrial redox interface. The purine nucleotide cycle consumes aspartate and releases fumarate in a manner involving fatty acid oxidation and ATP-citrate lyase activity. Participates in pattern recognition receptor-induced cytokines in macrophages: associates with the NOD2-signaling complex and promotes optimal NOD2-induced signaling, cytokine secretion and bacterial clearance. Localizes to the endoplasmic reticulum upon PRR stimulation of macrophages and associates with endoplasmic reticulum-stress sensors, promoting the endoplasmic reticulum unfolded protein response (UPR). Does not show laccase activity. The chain is Purine nucleoside phosphorylase LACC1 from Mus musculus (Mouse).